The primary structure comprises 1114 residues: WD repeat-containing protein 72 (1114 aa).

WD repeat units lie at residues 15-54, 60-102, 160-197, 327-373, 413-452, 470-515, and 566-605; these read APPH…KISA, GHSA…CVEK, KCMC…NSIQ, EENK…SKFD, GMTA…KAGL, GHHQ…ILHT, and KHLF…LERH. 2 disordered regions span residues 634 to 658 and 749 to 798; these read SETH…VPCP and SLQT…PPRK. The span at 780-796 shows a compositional bias: basic residues; it reads KRQKKMKSSKKAHPKPP. S1093 and S1095 each carry phosphoserine.

Expressed in maturation stage ameloblasts (at protein level).

It localises to the cytoplasmic vesicle. In terms of biological role, plays a major role in formation of tooth enamel. Specifically required during the maturation phase of amelogenesis for normal formation of the enamel matrix and clearance of enamel proteins. May be involved in localization of the calcium transporter SLC24A4 to the ameloblast cell membrane. The chain is WD repeat-containing protein 72 from Mus musculus (Mouse).